The primary structure comprises 220 residues: Protein GrpE (220 aa).

A disordered region spans residues 1-22 (MSDEKNKFTDASFENCDLKNPS).

This sequence belongs to the GrpE family. As to quaternary structure, homodimer.

It is found in the cytoplasm. Participates actively in the response to hyperosmotic and heat shock by preventing the aggregation of stress-denatured proteins, in association with DnaK and GrpE. It is the nucleotide exchange factor for DnaK and may function as a thermosensor. Unfolded proteins bind initially to DnaJ; upon interaction with the DnaJ-bound protein, DnaK hydrolyzes its bound ATP, resulting in the formation of a stable complex. GrpE releases ADP from DnaK; ATP binding to DnaK triggers the release of the substrate protein, thus completing the reaction cycle. Several rounds of ATP-dependent interactions between DnaJ, DnaK and GrpE are required for fully efficient folding. This Bartonella henselae (strain ATCC 49882 / DSM 28221 / CCUG 30454 / Houston 1) (Rochalimaea henselae) protein is Protein GrpE.